The following is a 300-amino-acid chain: Zinc finger protein RME1 (300 aa).

Residues 80-90 are compositionally biased toward polar residues; the sequence is QAYDSTSSTEE. The disordered stretch occupies residues 80-100; it reads QAYDSTSSTEEGTAPQLRPDE. 3 consecutive C2H2-type zinc fingers follow at residues 178–199, 206–234, and 256–281; these read YHCS…HLDE, CKCP…ASQH, and LNCP…AMVH.

The protein resides in the nucleus. Functionally, involved in the control of meiosis. Represses the transcription of the IME1 gene thereby inhibiting cells from entering meiosis. But also activates the CLN2 gene thus promoting mitosis. The sequence is that of Zinc finger protein RME1 (RME1) from Saccharomyces cerevisiae (strain ATCC 204508 / S288c) (Baker's yeast).